The sequence spans 715 residues: Putative pentatricopeptide repeat-containing protein At3g23330 (715 aa).

13 PPR repeats span residues 38–68, 69–103, 104–138, 139–172, 206–240, 241–275, 276–306, 307–341, 342–376, 377–407, 408–442, 443–473, and 479–509; these read SHTS…LKSP, PVLA…GRCP, DHNV…GMDC, DLYT…MPQR, DVVS…DLKP, DSFT…GIDS, DVYI…LYCR, DGIS…KVKP, GAVA…GFGS, NIFI…MNVL, DEVS…GVKP, NQVA…MTKV, and ELEH…MCVE. The tract at residues 514 to 589 is type E motif; that stretch reads VWSTLLSSCS…KPACSWIEMK (76 aa). The interval 590-620 is type E(+) motif; sequence NKTHGFVSGDRSHPSMDKINEFLKAVMEQME. The tract at residues 621-715 is type DYW motif; the sequence is KEGYVADTSG…RGNCSCGDYW (95 aa).

Belongs to the PPR family. PCMP-H subfamily.

This chain is Putative pentatricopeptide repeat-containing protein At3g23330 (PCMP-H32), found in Arabidopsis thaliana (Mouse-ear cress).